The sequence spans 208 residues: PITH domain-containing protein ZK353.9 (208 aa).

In terms of domain architecture, PITH spans 17 to 189; that stretch reads EVPGDDVYRY…RIAIATYESR (173 aa).

It belongs to the PITHD1 family.

The polypeptide is PITH domain-containing protein ZK353.9 (Caenorhabditis elegans).